Reading from the N-terminus, the 931-residue chain is Neuropilin-2 (931 aa).

The or 22 signal peptide spans 1–20; it reads MDMFPLTWVFLALYFSRHQV. Residues 21 to 864 lie on the Extracellular side of the membrane; that stretch reads RGQPDPPCGG…EKSWLYTLDP (844 aa). Disulfide bonds link Cys-28-Cys-55, Cys-83-Cys-105, and Cys-149-Cys-175. 2 CUB domains span residues 28–142 and 149–267; these read CGGR…YEIF and CSKN…YYLV. Asn-152 and Asn-157 each carry an N-linked (GlcNAc...) asparagine glycan. Positions 197, 211, and 252 each coordinate Ca(2+). Cys-208 and Cys-230 form a disulfide bridge. 2 disulfides stabilise this stretch: Cys-277/Cys-427 and Cys-434/Cys-592. 2 F5/8 type C domains span residues 277–427 and 434–592; these read CNVP…LFGC and CSNM…VLGC. Positions 298–310 are enriched in polar residues; it reads TYSDGRWTPQQSR. The disordered stretch occupies residues 298 to 317; it reads TYSDGRWTPQQSRLHGDDNG. A disordered region spans residues 601–622; the sequence is VETLGPTVKSEETTTPYPTEEE. An N-linked (GlcNAc...) asparagine glycan is attached at Asn-629. Residues 642-802 form the MAM domain; the sequence is SGFNCNFDFL…TDVPLENCME (161 aa). Asn-839 carries N-linked (GlcNAc...) asparagine glycosylation. A helical membrane pass occupies residues 865-889; it reads ILITIIAMSSLGVLLGATCAGLLLY. At 890–931 the chain is on the cytoplasmic side; it reads CTCSYSGLSSRSCTTLENYNFELYDGLKHKVKMNHQKCCSEA.

The protein belongs to the neuropilin family. Heterodimer with NRP1. Binds PLXNB1. In terms of assembly, (Microbial infection) Interacts with human cytomegalovirus proteins gL, UL128, UL130 and UL131A.

Its subcellular location is the membrane. The protein resides in the secreted. Its function is as follows. High affinity receptor for semaphorins 3C, 3F, VEGF-165 and VEGF-145 isoforms of VEGF, and the PLGF-2 isoform of PGF. Functionally, (Microbial infection) Acts as a receptor for human cytomegalovirus pentamer-dependent entry in epithelial and endothelial cells. The sequence is that of Neuropilin-2 (NRP2) from Homo sapiens (Human).